Here is a 270-residue protein sequence, read N- to C-terminus: tRNA pseudouridine synthase A (270 aa).

D60 serves as the catalytic Nucleophile. Y118 is a substrate binding site.

It belongs to the tRNA pseudouridine synthase TruA family. Homodimer.

It carries out the reaction uridine(38/39/40) in tRNA = pseudouridine(38/39/40) in tRNA. Functionally, formation of pseudouridine at positions 38, 39 and 40 in the anticodon stem and loop of transfer RNAs. This chain is tRNA pseudouridine synthase A, found in Salmonella agona (strain SL483).